We begin with the raw amino-acid sequence, 61 residues long: Large ribosomal subunit protein uL30 (61 aa).

It belongs to the universal ribosomal protein uL30 family. Part of the 50S ribosomal subunit.

The chain is Large ribosomal subunit protein uL30 from Rubrobacter xylanophilus (strain DSM 9941 / JCM 11954 / NBRC 16129 / PRD-1).